Here is an 87-residue protein sequence, read N- to C-terminus: Defensin-like protein 175 (87 aa).

A signal peptide spans 1-23 (MAKATSSLVVPIIFLVIFALVEQ). 4 cysteine pairs are disulfide-bonded: Cys27–Cys66, Cys36–Cys55, Cys39–Cys60, and Cys43–Cys62.

It belongs to the DEFL family.

The protein resides in the secreted. This Arabidopsis thaliana (Mouse-ear cress) protein is Defensin-like protein 175.